Here is a 257-residue protein sequence, read N- to C-terminus: NAD-capped RNA hydrolase NudC (257 aa).

Arg-69 is a binding site for substrate. Residues Cys-98 and Cys-101 each coordinate Zn(2+). Residue Glu-111 participates in substrate binding. The Zn(2+) site is built by Cys-116 and Cys-119. Tyr-124 is a binding site for substrate. A Nudix hydrolase domain is found at 125–248 (PQIAPCIIVA…TVARRLIEDT (124 aa)). Positions 158, 174, and 178 each coordinate a divalent metal cation. Positions 159–180 (GFVEVGETLEQAVAREVMEESG) match the Nudix box motif. Position 192–199 (192–199 (QPWPFPQS)) interacts with substrate. Glu-219 contributes to the a divalent metal cation binding site. Ala-241 lines the substrate pocket.

The protein belongs to the Nudix hydrolase family. NudC subfamily. As to quaternary structure, homodimer. Requires Mg(2+) as cofactor. It depends on Mn(2+) as a cofactor. The cofactor is Zn(2+).

The enzyme catalyses a 5'-end NAD(+)-phospho-ribonucleoside in mRNA + H2O = a 5'-end phospho-adenosine-phospho-ribonucleoside in mRNA + beta-nicotinamide D-ribonucleotide + 2 H(+). The catalysed reaction is NAD(+) + H2O = beta-nicotinamide D-ribonucleotide + AMP + 2 H(+). It catalyses the reaction NADH + H2O = reduced beta-nicotinamide D-ribonucleotide + AMP + 2 H(+). Functionally, mRNA decapping enzyme that specifically removes the nicotinamide adenine dinucleotide (NAD) cap from a subset of mRNAs by hydrolyzing the diphosphate linkage to produce nicotinamide mononucleotide (NMN) and 5' monophosphate mRNA. The NAD-cap is present at the 5'-end of some mRNAs and stabilizes RNA against 5'-processing. Has preference for mRNAs with a 5'-end purine. Catalyzes the hydrolysis of a broad range of dinucleotide pyrophosphates. The chain is NAD-capped RNA hydrolase NudC from Salmonella typhimurium (strain LT2 / SGSC1412 / ATCC 700720).